The following is a 156-amino-acid chain: Protein-export protein SecB (156 aa).

It belongs to the SecB family. As to quaternary structure, homotetramer, a dimer of dimers. One homotetramer interacts with 1 SecA dimer.

It localises to the cytoplasm. One of the proteins required for the normal export of preproteins out of the cell cytoplasm. It is a molecular chaperone that binds to a subset of precursor proteins, maintaining them in a translocation-competent state. It also specifically binds to its receptor SecA. The protein is Protein-export protein SecB of Serratia proteamaculans (strain 568).